The following is a 205-amino-acid chain: Small ribosomal subunit protein mS26 (205 aa).

The N-terminal 27 residues, 1-27 (MLRALSRLGAGTPCRPRAPLVLPARGR), are a transit peptide targeting the mitochondrion.

The protein belongs to the mitochondrion-specific ribosomal protein mS26 family. Component of the mitochondrial small ribosomal subunit (mt-SSU). Mature mammalian 55S mitochondrial ribosomes consist of a small (28S) and a large (39S) subunit. The 28S small subunit contains a 12S ribosomal RNA (12S mt-rRNA) and 30 different proteins. The 39S large subunit contains a 16S rRNA (16S mt-rRNA), a copy of mitochondrial valine transfer RNA (mt-tRNA(Val)), which plays an integral structural role, and 52 different proteins.

It is found in the mitochondrion. The sequence is that of Small ribosomal subunit protein mS26 (MRPS26) from Homo sapiens (Human).